A 205-amino-acid chain; its full sequence is Large ribosomal subunit protein uL10 (205 aa).

Residues 167–205 form a disordered region; that stretch reads AQGAAPAEAKAEAPASEEKAADTPAEQPAESAPEAAPEA. Composition is skewed to low complexity over residues 169–180 and 190–205; these read GAAPAEAKAEAP and PAEQPAESAPEAAPEA.

This sequence belongs to the universal ribosomal protein uL10 family. Part of the ribosomal stalk of the 50S ribosomal subunit. The N-terminus interacts with L11 and the large rRNA to form the base of the stalk. The C-terminus forms an elongated spine to which L12 dimers bind in a sequential fashion forming a multimeric L10(L12)X complex.

Its function is as follows. Forms part of the ribosomal stalk, playing a central role in the interaction of the ribosome with GTP-bound translation factors. This chain is Large ribosomal subunit protein uL10, found in Treponema denticola (strain ATCC 35405 / DSM 14222 / CIP 103919 / JCM 8153 / KCTC 15104).